The following is a 329-amino-acid chain: Peroxidase 51 (329 aa).

An N-terminal signal peptide occupies residues 1–25 (MVVMNKTNLLLLILSLFLAINLSSA). Cystine bridges form between Cys36/Cys119, Cys69/Cys74, Cys125/Cys325, and Cys204/Cys236. Residue His67 is the Proton acceptor of the active site. 5 residues coordinate Ca(2+): Asp68, Val71, Gly73, Asp75, and Ser77. Residue Pro167 coordinates substrate. Heme b is bound at residue His197. Position 198 (Thr198) interacts with Ca(2+). A glycan (N-linked (GlcNAc...) asparagine) is linked at Asn215. Positions 249, 252, and 257 each coordinate Ca(2+).

The protein belongs to the peroxidase family. Classical plant (class III) peroxidase subfamily. Heme b serves as cofactor. It depends on Ca(2+) as a cofactor.

It localises to the secreted. It catalyses the reaction 2 a phenolic donor + H2O2 = 2 a phenolic radical donor + 2 H2O. Its function is as follows. Removal of H(2)O(2), oxidation of toxic reductants, biosynthesis and degradation of lignin, suberization, auxin catabolism, response to environmental stresses such as wounding, pathogen attack and oxidative stress. These functions might be dependent on each isozyme/isoform in each plant tissue. In Arabidopsis thaliana (Mouse-ear cress), this protein is Peroxidase 51 (PER51).